A 318-amino-acid polypeptide reads, in one-letter code: Acyl-CoA dehydrogenase IpdE2 (318 aa).

Positions 210 and 277 each coordinate FAD.

It belongs to the acyl-CoA dehydrogenase family. In terms of assembly, heterotetramer composed of 2 IpdE1 subunits and 2 IpdE2 subunits. The cofactor is FAD.

The catalysed reaction is 3-[(3aS,4S,5R,7aS)-5-hydroxy-7a-methyl-1-oxo-octahydro-1H-inden-4-yl]propanoyl-CoA + A = (2E)-3-[(3aS,4S,5R,7aS)-5-hydroxy-7a-methyl-1-oxo-octahydro-1H-inden-4-yl]prop-2-enoyl-CoA + AH2. The protein operates within steroid metabolism; cholesterol degradation. In terms of biological role, involved in cholesterol degradation. Catalyzes the dehydrogenation of 5OH-HIP-CoA to 5OH-HIPE-CoA. Can also use octanoyl-CoA and dihydroferuloyl-CoA, with lower efficiency. Cannot use 3-oxo-4-pregnene-20-carboxyl-CoA (3-OPC-CoA). The sequence is that of Acyl-CoA dehydrogenase IpdE2 from Mycobacterium tuberculosis (strain ATCC 25618 / H37Rv).